A 288-amino-acid chain; its full sequence is Hypersensitive-induced response protein-like protein 1 (288 aa).

Residue glycine 2 is the site of N-myristoyl glycine attachment.

In terms of biological role, positive regulator of hypersensitive response (HR)-like cell death. May be involved in potassium ion channel regulation. In Oryza sativa subsp. japonica (Rice), this protein is Hypersensitive-induced response protein-like protein 1.